The following is a 401-amino-acid chain: 26S proteasome regulatory subunit 6A (401 aa).

Residue 189 to 196 (GPPGTGKT) participates in ATP binding.

It belongs to the AAA ATPase family. In terms of assembly, the 26S proteasome consists of a 20S proteasome core and two 19S regulatory subunits. The 20S proteasome core is composed of 28 subunits that are arranged in four stacked rings, resulting in a barrel-shaped structure. The two end rings are each formed by seven alpha subunits, and the two central rings are each formed by seven beta subunits. The catalytic chamber with the active sites is on the inside of the barrel.

It localises to the cytoplasm. It is found in the nucleus. Functionally, acts as a regulatory subunit of the 26S proteasome which degrades poly-ubiquitinated proteins in the cytoplasm and in the nucleus. It is essential for the regulated turnover of proteins and for the removal of misfolded proteins. The proteasome is a multicatalytic proteinase complex that is characterized by its ability to cleave peptides with Arg, Phe, Tyr, Leu, and Glu adjacent to the leaving group at neutral or slightly basic pH. This Encephalitozoon cuniculi (strain GB-M1) (Microsporidian parasite) protein is 26S proteasome regulatory subunit 6A (RPT5).